A 479-amino-acid polypeptide reads, in one-letter code: MVHSSMGAPEIRMSKPLEAEKQGLDSPSEHTDTERNGPDTNHQNPQNKTSPFSVSPTGPSTKIKAEDPSGDSAPAAPLPPQPAQPHLPQAQLMLTGSQLAGDIQQLLQLQQLVLVPGHHLQPPAQFLLPQAQQSQPGLLPTPNLFQLPQQTQGALLTSQPRAGLPTQAVTRPTLPDPHLSHPQPPKCLEPPSHPEEPSDLEELEQFARTFKQRRIKLGFTQGDVGLAMGKLYGNDFSQTTISRFEALNLSFKNMCKLKPLLEKWLNDAETMSVDSSLPSPNQLSSPSLGFDGLPGRRRKKRTSIETNVRFALEKSFLANQKPTSEEILLIAEQLHMEKEVIRVWFCNRRQKEKRINPCSAAPMLPSPGKPASYSPHMVTPQGGAGTLPLSQASSSLSTTVTTLSSAVGTLHPSRTAGGGGGGGGAAPPLNSIPSVTPPPPATTNSTNPSPQGSHSAIGLSGLNPSTGPGLWWNPAPYQP.

5 disordered regions span residues 1 to 86 (MVHS…AQPH), 166 to 200 (TQAVTRPTLPDPHLSHPQPPKCLEPPSHPEEPSDL), 275 to 298 (SSLPSPNQLSSPSLGFDGLPGRRR), 357 to 393 (PCSAAPMLPSPGKPASYSPHMVTPQGGAGTLPLSQAS), and 409 to 479 (TLHP…PYQP). The segment covering 12 to 37 (RMSKPLEAEKQGLDSPSEHTDTERNG) has biased composition (basic and acidic residues). Positions 38–60 (PDTNHQNPQNKTSPFSVSPTGPS) are enriched in polar residues. Positions 76-85 (APLPPQPAQP) are enriched in pro residues. Residues 195–269 (EEPSDLEELE…LLEKWLNDAE (75 aa)) enclose the POU-specific domain. Over residues 275–288 (SSLPSPNQLSSPSL) the composition is skewed to low complexity. The homeobox DNA-binding region spans 297–356 (RRKKRTSIETNVRFALEKSFLANQKPTSEEILLIAEQLHMEKEVIRVWFCNRRQKEKRIN). The leucine-zipper stretch occupies residues 389-410 (LSQASSSLSTTVTTLSSAVGTL). The span at 416–425 (AGGGGGGGGA) shows a compositional bias: gly residues.

The protein belongs to the POU transcription factor family. Class-2 subfamily. As to quaternary structure, interacts with NR3C1, AR and PGR. Interacts with POU2AF1; the interaction increases POU2F2 transactivation activity. As to expression, isoform 3 is B-cell specific. Isoform 5 is expressed in B-cells and the immunoglobulin-expressing T-cell line MOLT-4, but not in the T-cell line BW5147.

It localises to the cytoplasm. It is found in the nucleus. Transactivation activity is enhanced by transcriptional coactivator POU2AF1. In terms of biological role, transcription factor that specifically binds to the octamer motif (5'-ATTTGCAT-3'). Regulates IL6 expression in B cells with POU2AF1. Regulates transcription in a number of tissues in addition to activating immunoglobulin gene expression. Modulates transcription transactivation by NR3C1, AR and PGR. Activates the U2 small nuclear RNA (snRNA) promoter. The protein is POU domain, class 2, transcription factor 2 of Homo sapiens (Human).